A 159-amino-acid polypeptide reads, in one-letter code: Large ribosomal subunit protein uL10 (159 aa).

It belongs to the universal ribosomal protein uL10 family. As to quaternary structure, part of the ribosomal stalk of the 50S ribosomal subunit. The N-terminus interacts with L11 and the large rRNA to form the base of the stalk. The C-terminus forms an elongated spine to which L12 dimers bind in a sequential fashion forming a multimeric L10(L12)X complex.

In terms of biological role, forms part of the ribosomal stalk, playing a central role in the interaction of the ribosome with GTP-bound translation factors. The chain is Large ribosomal subunit protein uL10 from Campylobacter jejuni subsp. jejuni serotype O:6 (strain 81116 / NCTC 11828).